Reading from the N-terminus, the 590-residue chain is NADH-ubiquinone oxidoreductase chain 5 (590 aa).

18 consecutive transmembrane segments (helical) span residues 1–21, 28–48, 58–78, 81–101, 113–133, 136–156, 176–198, 245–265, 273–293, 310–330, 333–353, 372–392, 395–415, 428–450, 461–481, 501–521, 536–556, and 568–588; these read MFLI…SFMF, FWLS…SFLM, YYDF…TYVC, FYMF…FYAF, FLII…SYDF, AYCG…YFWY, VLLI…TFYF, ALIH…FVYW, YFYN…LCVF, ISFS…LFFC, MFYK…FFGL, LLLI…GFYC, MLLA…LFIS, FLLF…FLLF, ISLY…CIFV, IAIF…GCLF, IFFV…YFVC, and FVIY…LWIL.

This sequence belongs to the complex I subunit 5 family.

Its subcellular location is the mitochondrion inner membrane. The enzyme catalyses a ubiquinone + NADH + 5 H(+)(in) = a ubiquinol + NAD(+) + 4 H(+)(out). Functionally, core subunit of the mitochondrial membrane respiratory chain NADH dehydrogenase (Complex I) that is believed to belong to the minimal assembly required for catalysis. Complex I functions in the transfer of electrons from NADH to the respiratory chain. The immediate electron acceptor for the enzyme is believed to be ubiquinone. This is NADH-ubiquinone oxidoreductase chain 5 (ND5) from Trypanosoma brucei brucei.